The sequence spans 142 residues: Large ribosomal subunit protein uL11 (142 aa).

Belongs to the universal ribosomal protein uL11 family. As to quaternary structure, part of the ribosomal stalk of the 50S ribosomal subunit. Interacts with L10 and the large rRNA to form the base of the stalk. L10 forms an elongated spine to which L12 dimers bind in a sequential fashion forming a multimeric L10(L12)X complex. One or more lysine residues are methylated.

In terms of biological role, forms part of the ribosomal stalk which helps the ribosome interact with GTP-bound translation factors. The polypeptide is Large ribosomal subunit protein uL11 (Photobacterium profundum (strain SS9)).